Here is a 260-residue protein sequence, read N- to C-terminus: Cell wall synthesis protein Wag31 (260 aa).

The stretch at 31–64 forms a coiled coil; the sequence is FLDLVENELTRLIEENSDLRQRINELDQELAAGG. Position 73 is a phosphothreonine (threonine 73). The stretch at 161 to 196 forms a coiled coil; the sequence is MLADAQSRSEAQLRQAQEKADALQADAERKHSEIMG. Residues 233–260 form a disordered region; that stretch reads ELGQRGSAAPVDSNADAGGFDQFNRGKN.

The protein belongs to the DivIVA family. In terms of assembly, forms homooligomers. In terms of processing, phosphorylated by PknA. Phosphorylation enhances polar localization, which in turn heightens polar peptidoglycan biosynthesis.

It localises to the cytoplasm. Functionally, important for maintaining cell shape and cell wall integrity by localizing peptidoglycan synthesis to the cell poles. This Mycobacterium tuberculosis (strain CDC 1551 / Oshkosh) protein is Cell wall synthesis protein Wag31 (wag31).